The chain runs to 168 residues: uncharacterized protein (168 aa).

Residues Met-1–Ala-21 constitute a signal peptide (or 19).

This is an uncharacterized protein from Haemophilus influenzae (strain ATCC 51907 / DSM 11121 / KW20 / Rd).